The following is a 538-amino-acid chain: ATP synthase subunit alpha, mitochondrial (538 aa).

Residue 197–204 (GDRQTGKT) coordinates ATP. The segment at 228-248 (FCIYVAVGQKRSTVAQIVKRL) is essential and sufficient for enterobactin binding.

It belongs to the ATPase alpha/beta chains family. Subunit of the F-type ATPase which has 2 components, CF(1) - the catalytic core - and CF(0) - the membrane proton channel. Ubiquitous (at protein level).

The protein localises to the mitochondrion. The protein resides in the mitochondrion inner membrane. In terms of biological role, mitochondrial membrane ATP synthase (F(1)F(0) ATP synthase or Complex V) produces ATP from ADP in the presence of a proton gradient across the membrane which is generated by electron transport complexes of the respiratory chain. F-type ATPases consist of two structural domains, F(1) - containing the extramembraneous catalytic core, and F(0) - containing the membrane proton channel, linked together by a central stalk and a peripheral stalk. During catalysis, ATP synthesis in the catalytic domain of F(1) is coupled via a rotary mechanism of the central stalk subunits to proton translocation. Subunits alpha and beta form the catalytic core in F(1). Rotation of the central stalk against the surrounding subunits leads to hydrolysis of ATP in three separate catalytic sites on the beta subunits. Subunit alpha does not bear the catalytic high-affinity ATP-binding sites. Binds the bacterial siderophore enterobactin and is required for the assimilation of enterobactin-bound iron from non-pathogenic bacteria. Promotes mitochondrial accumulation of enterobactin-derived iron ions. In Caenorhabditis elegans, this protein is ATP synthase subunit alpha, mitochondrial.